The primary structure comprises 519 residues: Probable cytochrome P450 513D1 (519 aa).

The chain crosses the membrane as a helical span at residues 1–21 (MGISSIIIILFIIVLLKKLIK). C464 is a binding site for heme.

It belongs to the cytochrome P450 family. It depends on heme as a cofactor.

It localises to the membrane. This chain is Probable cytochrome P450 513D1 (cyp513D1), found in Dictyostelium discoideum (Social amoeba).